The following is a 193-amino-acid chain: Ras-like protein 2 (193 aa).

GTP is bound at residue 12 to 19 (GGGGVGKS). An Effector region motif is present at residues 34–42 (YDPTIEDSY). Residues 59 to 63 (DTAGQ) and 118 to 121 (NKCD) each bind GTP. Cys-190 carries the post-translational modification Cysteine methyl ester. Cys-190 is lipidated: S-geranylgeranyl cysteine. A propeptide spans 191-193 (KLL) (removed in mature form).

Belongs to the small GTPase superfamily. Ras family.

The protein resides in the cell membrane. It catalyses the reaction GTP + H2O = GDP + phosphate + H(+). In terms of biological role, ras proteins bind GDP/GTP and possess intrinsic GTPase activity. In Physarum polycephalum (Slime mold), this protein is Ras-like protein 2 (RAS-2).